Consider the following 519-residue polypeptide: Threonine synthase, chloroplastic (519 aa).

The N-terminal 40 residues, 1–40 (MAASCMLRSSFISPGLPQLHHQSTSKPNNGIHFFTPIKAT), are a transit peptide targeting the chloroplast. K196 is subject to N6-(pyridoxal phosphate)lysine. Pyridoxal 5'-phosphate contacts are provided by residues 328-332 (GNLGN) and T465.

The protein belongs to the threonine synthase family. As to quaternary structure, homodimer. The cofactor is pyridoxal 5'-phosphate.

It localises to the plastid. It is found in the chloroplast. It catalyses the reaction O-phospho-L-homoserine + H2O = L-threonine + phosphate. Its pathway is amino-acid biosynthesis; L-threonine biosynthesis; L-threonine from L-aspartate: step 5/5. With respect to regulation, allosterically activated by S-adenosyl-methionine (SAM). Functionally, catalyzes the gamma-elimination of phosphate from L-phosphohomoserine and the beta-addition of water to produce L-threonine. This is Threonine synthase, chloroplastic from Solanum tuberosum (Potato).